We begin with the raw amino-acid sequence, 660 residues long: Protein translocase subunit SecA 2 (660 aa).

Residues Q113, 131–135 (GEGKT), and D539 each bind ATP.

The protein belongs to the SecA family. As to quaternary structure, monomer and homodimer. Part of the essential Sec protein translocation apparatus which comprises SecA, SecYEG and auxiliary proteins SecDF-YajC and YidC.

It is found in the cell inner membrane. The protein resides in the cytoplasm. It catalyses the reaction ATP + H2O + cellular proteinSide 1 = ADP + phosphate + cellular proteinSide 2.. Functionally, part of the Sec protein translocase complex. Interacts with the SecYEG preprotein conducting channel. Has a central role in coupling the hydrolysis of ATP to the transfer of proteins into and across the cell membrane, serving both as a receptor for the preprotein-SecB complex and as an ATP-driven molecular motor driving the stepwise translocation of polypeptide chains across the membrane. The sequence is that of Protein translocase subunit SecA 2 from Bordetella avium (strain 197N).